Consider the following 234-residue polypeptide: Large ribosomal subunit protein uL1 (234 aa).

Belongs to the universal ribosomal protein uL1 family. Part of the 50S ribosomal subunit.

In terms of biological role, binds directly to 23S rRNA. The L1 stalk is quite mobile in the ribosome, and is involved in E site tRNA release. Functionally, protein L1 is also a translational repressor protein, it controls the translation of the L11 operon by binding to its mRNA. This chain is Large ribosomal subunit protein uL1, found in Salmonella agona (strain SL483).